We begin with the raw amino-acid sequence, 154 residues long: Small ribosomal subunit protein uS9 (154 aa).

The tract at residues 135-154 (KESKKYGLKKARKAPQYSKR) is disordered. The segment covering 140 to 154 (YGLKKARKAPQYSKR) has biased composition (basic residues).

Belongs to the universal ribosomal protein uS9 family.

The polypeptide is Small ribosomal subunit protein uS9 (Salinispora arenicola (strain CNS-205)).